The following is a 168-amino-acid chain: Disulfide bond formation protein B 1 (168 aa).

The Cytoplasmic segment spans residues 1–14 (MNELTSRLNRERRF). The helical transmembrane segment at 15–31 (LVLLGVICLALIGGALY) threads the bilayer. Topologically, residues 32-49 (MQVVLGEAPCPLCILQRY) are periplasmic. Cysteine 41 and cysteine 44 are joined by a disulfide. Residues 50–65 (ALLFIAIFAFIAAAMP) traverse the membrane as a helical segment. The Cytoplasmic portion of the chain corresponds to 66–72 (GRKSLTF). A helical membrane pass occupies residues 73 to 89 (FEVLVVLSAIGGIVAAG). Residues 90-144 (NHVYILANPMVSCGIDTLQPIVDDLPLAKLWPLAFQVDGFCSTPYPPILGLSLAQ) are Periplasmic-facing. A disulfide bond links cysteine 102 and cysteine 130. The helical transmembrane segment at 145 to 163 (WALVAFVLTTVLVPLGIYR) threads the bilayer. The Cytoplasmic segment spans residues 164–168 (NRRRG).

The protein belongs to the DsbB family.

It localises to the cell inner membrane. Functionally, required for disulfide bond formation in some periplasmic proteins. Acts by oxidizing the DsbA protein. In Pseudomonas entomophila (strain L48), this protein is Disulfide bond formation protein B 1.